We begin with the raw amino-acid sequence, 506 residues long: Gamma-aminobutyric acid receptor subunit epsilon (506 aa).

The signal sequence occupies residues 1–22 (MLSKVLPVLLGILLILQSRVEG). The interval 23 to 66 (PQTESKNEASSRDVVYGPQPQPLENQLLSEETKSTETETGSRVG) is disordered. Topologically, residues 23–280 (PQTESKNEAS…FNVSRRFGYV (258 aa)) are extracellular. N-linked (GlcNAc...) asparagine glycosylation is present at N134. C195 and C209 are oxidised to a cystine. N252 carries N-linked (GlcNAc...) asparagine glycosylation. A helical membrane pass occupies residues 281-301 (AFQNYVPSSVTTMLSWVSFWI). Residues 302–307 (KTESAP) lie on the Cytoplasmic side of the membrane. Residues 308-327 (ARTSLGITSVLTMTTLGTFS) form a helical membrane-spanning segment. The Extracellular segment spans residues 328 to 343 (RKNFPRVSYITALDFY). The chain crosses the membrane as a helical span at residues 344–364 (IAICFVFCFCALLEFAVLNFL). Residues 365–485 (IYNQTKAHAS…HVYRLDNYSR (121 aa)) are Cytoplasmic-facing. The disordered stretch occupies residues 413 to 438 (EGSDGEERPSCSAQQPPSPGSPEGPR). Residues 486–506 (VVFPVTFFFFNVLYWLVCLNL) traverse the membrane as a helical segment.

It belongs to the ligand-gated ion channel (TC 1.A.9) family. Gamma-aminobutyric acid receptor (TC 1.A.9.5) subfamily. GABRE sub-subfamily. As to quaternary structure, heteropentamer, formed by a combination of alpha (GABRA1-6), beta (GABRB1-3), gamma (GABRG1-3), delta (GABRD), epsilon (GABRE), rho (GABRR1-3), pi (GABRP) and theta (GABRQ) chains, each subunit exhibiting distinct physiological and pharmacological properties. In terms of tissue distribution, expressed in many tissues. Highest levels of expression in adult heart and placenta.

Its subcellular location is the cell membrane. The protein resides in the postsynaptic cell membrane. It catalyses the reaction chloride(in) = chloride(out). With respect to regulation, potentiated by pentobarbital, loreclezole, and lanthanum and inhibited by zinc and furosemide. Introduction of the epsilon subunit to the receptor complex resulted in diminished modulatory effects by etomidate, propofol, pregnanolone and flurazepam. In terms of biological role, epsilon subunit of the heteropentameric ligand-gated chloride channel gated by gamma-aminobutyric acid (GABA), a major inhibitory neurotransmitter in the brain. GABA-gated chloride channels, also named GABA(A) receptors (GABAAR), consist of five subunits arranged around a central pore and contain GABA active binding site(s) located at the alpha and beta subunit interfaces. When activated by GABA, GABAARs selectively allow the flow of chloride anions across the cell membrane down their electrochemical gradient. GABAARs containing epsilon subunits also permit spontaneous chloride channel activity while preserving the structural information required for GABA-gated openings. GABARs containing epsilon subunit may regulate cardiac function. This Homo sapiens (Human) protein is Gamma-aminobutyric acid receptor subunit epsilon.